Reading from the N-terminus, the 219-residue chain is Ribosome maturation factor RimP (219 aa).

Disordered regions lie at residues 1–38 (MTQRGRAAKPTGPTGRPRRTGGQRGTDRVGRGGDLATR) and 189–219 (VEFTRPGEPDAFDGTDEAGDFDDDDVEDEER). Residues 198-219 (DAFDGTDEAGDFDDDDVEDEER) are compositionally biased toward acidic residues.

It belongs to the RimP family.

It localises to the cytoplasm. Functionally, required for maturation of 30S ribosomal subunits. This Salinispora arenicola (strain CNS-205) protein is Ribosome maturation factor RimP.